Reading from the N-terminus, the 438-residue chain is MKIQHLMQDPFIQKLMRFEEVMWFNPKSAGVKTGLSYVGLDVSDTQQAAERLQRFAPYFCRAFPETQKTKGILESELVSIDKMKSALIDHYHMPIQGRLLLKKDSHLPISGSIKARGGIYEVLAYAEKLALEHHLITESDDYSQLCDEKIKDFFSRYSIAVGSTGNLGLSIGIMGAVLGFKVSVHMSADAREWKKQKLRSYGVNVVEYTQDYGVAVAQGRKAALSDPNCFFIDDENSTTLFLGYSVAGQRLKQQFLEQGIKVDENHPLFVYLPCGVGGGPGGVAFGLKLAFGDYVHCIFAEPTHSPCMLLGVYTGLHDKIAVQDLGIDNITAADGLAVGRASGFVGRAMEHLLDGFYTIEDQKLYDLLGLLHKTENIQLEPSALAGMIGPLHINHSDYLRRYHITQEQLANATHIVWATGGGMVPDVEMQKYLSLGRF.

The residue at position 114 (Lys-114) is an N6-(pyridoxal phosphate)lysine.

It belongs to the serine/threonine dehydratase family. DsdA subfamily. The cofactor is pyridoxal 5'-phosphate.

It catalyses the reaction D-serine = pyruvate + NH4(+). This chain is Probable D-serine dehydratase, found in Histophilus somni (strain 2336) (Haemophilus somnus).